Reading from the N-terminus, the 356-residue chain is Cobalt-precorrin-5B C(1)-methyltransferase (356 aa).

It belongs to the CbiD family.

The enzyme catalyses Co-precorrin-5B + S-adenosyl-L-methionine = Co-precorrin-6A + S-adenosyl-L-homocysteine. It participates in cofactor biosynthesis; adenosylcobalamin biosynthesis; cob(II)yrinate a,c-diamide from sirohydrochlorin (anaerobic route): step 6/10. Its function is as follows. Catalyzes the methylation of C-1 in cobalt-precorrin-5B to form cobalt-precorrin-6A. The polypeptide is Cobalt-precorrin-5B C(1)-methyltransferase (Citrifermentans bemidjiense (strain ATCC BAA-1014 / DSM 16622 / JCM 12645 / Bem) (Geobacter bemidjiensis)).